Consider the following 510-residue polypeptide: GMP synthase [glutamine-hydrolyzing] (510 aa).

The Glutamine amidotransferase type-1 domain occupies 5–195; the sequence is MIVVLDFGSQ…VFEVCGCRGD (191 aa). Cys-82 serves as the catalytic Nucleophile. Active-site residues include His-169 and Glu-171. One can recognise a GMPS ATP-PPase domain in the interval 196-385; that stretch reads WTMENFIDEQ…LGIPDEIVWR (190 aa). 223 to 229 is a binding site for ATP; that stretch reads SGGVDSS.

In terms of assembly, homodimer.

The enzyme catalyses XMP + L-glutamine + ATP + H2O = GMP + L-glutamate + AMP + diphosphate + 2 H(+). The protein operates within purine metabolism; GMP biosynthesis; GMP from XMP (L-Gln route): step 1/1. Catalyzes the synthesis of GMP from XMP. The protein is GMP synthase [glutamine-hydrolyzing] of Geobacillus kaustophilus (strain HTA426).